Here is a 533-residue protein sequence, read N- to C-terminus: GPI mannosyltransferase 4 (533 aa).

The next 6 membrane-spanning stretches (helical) occupy residues 8–28 (AIIY…SSYI), 61–81 (IRSV…CRCI), 91–111 (ILLF…LSIW), 144–164 (IETI…SVPL), 175–195 (LLAI…AFVI), and 216–236 (IFLH…ACIL). A glycan (N-linked (GlcNAc...) asparagine) is linked at Asn261. The next 4 membrane-spanning stretches (helical) occupy residues 274–294 (FFTN…LWDV), 297–317 (PATW…HQEP), 319–335 (FLLP…GCLV), and 338–358 (YWIK…FGIM). N-linked (GlcNAc...) asparagine glycans are attached at residues Asn378, Asn419, Asn425, Asn452, Asn477, and Asn518.

This sequence belongs to the glycosyltransferase 22 family. PIGZ subfamily.

It localises to the endoplasmic reticulum membrane. Its pathway is glycolipid biosynthesis; glycosylphosphatidylinositol-anchor biosynthesis. In terms of biological role, alpha-1,2-mannosyltransferase involved in glycosylphosphatidylinositol-anchor biosynthesis. Transfers a fourth mannose to trimannosyl-GPIs during GPI precursor assembly. The presence of a fourth mannose in GPI is essential in fungi. In Schizosaccharomyces pombe (strain 972 / ATCC 24843) (Fission yeast), this protein is GPI mannosyltransferase 4 (smp3).